Consider the following 618-residue polypeptide: Tyrosine-protein kinase ZAP-70 (618 aa).

One can recognise an SH2 1 domain in the interval 10-102 (FFYGSISRAE…GLPCNLRKPC (93 aa)). The interval 103 to 162 (NRPPGLEPQPGVFDCLRDAMVRDYVRQTWKLEGDALEQAIISQAPQVEKLIATTAHERMP) is interdomain A. An SH2 2 domain is found at 163-254 (WYHSSLTREE…GLIYRLKEVC (92 aa)). At Tyr248 the chain carries Phosphotyrosine. The interval 255–336 (PNSSASAAVA…KKLFLKRENL (82 aa)) is interdomain B. The segment at 270-320 (AHPSTFTQPQRRVDTLNSDGYTPEPARLASSTDKPRPMPMDTSVYESPYSD) is disordered. Residues 273–289 (STFTQPQRRVDTLNSDG) are compositionally biased toward polar residues. The residue at position 287 (Ser287) is a Phosphoserine. Position 290 is a phosphotyrosine (Tyr290). Phosphotyrosine; by LCK is present on Tyr314. Phosphotyrosine is present on Tyr318. One can recognise a Protein kinase domain in the interval 337 to 597 (LVADIELGCG…VEQRMRNYYY (261 aa)). Residues 343 to 351 (LGCGNFGSV) and Lys368 each bind ATP. Asp460 (proton acceptor) is an active-site residue. Tyr491 and Tyr492 each carry phosphotyrosine. Lys543 participates in a covalent cross-link: Glycyl lysine isopeptide (Lys-Gly) (interchain with G-Cter in ubiquitin).

The protein belongs to the protein kinase superfamily. Tyr protein kinase family. SYK/ZAP-70 subfamily. Interacts with CD247/CD3Z; this interaction docks ZAP70 at the stimulated TCR. Interacts with NFAM1. Interacts with adapter protein SLA; this interaction negatively regulates T-cell receptor signaling. Interacts with VAV1. Interacts with CBL; this interaction promotes ubiquitination, internalization and subsequent degradation of CD247/CD3Z. Identified in a complex with CBL and UBE2L3. Interacts with SHB. Interacts with adapter protein SLA2; this interaction negatively regulates T-cell receptor signaling. Interacts with CBLB. Interacts (via SH2 domains) with RHOH; this interaction regulates ZAP70 subcellular localization. Interacts with DEF6. Interacts (ubiquitinated form) with OTUD7B and UBASH3B. Phosphorylated on tyrosine residues upon T-cell antigen receptor (TCR) stimulation. Phosphorylation of Tyr-314 and Tyr-314 are essential for ZAP70 positive function on T-lymphocyte activation whereas Tyr-290 has a negative regulatory role. Within the C-terminal kinase domain, Tyr-491 and Tyr-492 are phosphorylated after TCR induction, Tyr-491 playing a negative regulatory role and Tyr-492 a positive. Tyr-492 is dephosphorylated by PTN22. In terms of processing, ubiquitinated in response to T cell activation. Deubiquitinated by OTUD7B. Isoform 1 and isoform 2 are expressed in thymus, spleen and lymph nodes.

The protein localises to the cytoplasm. The protein resides in the cell membrane. The catalysed reaction is L-tyrosyl-[protein] + ATP = O-phospho-L-tyrosyl-[protein] + ADP + H(+). Its activity is regulated as follows. Activated by phosphorylation at Tyr-492 in the activation loop. In terms of biological role, tyrosine kinase that plays an essential role in regulation of the adaptive immune response. Regulates motility, adhesion and cytokine expression of mature T-cells, as well as thymocyte development. Also contributes to the development and activation of primary B-lymphocytes. When antigen presenting cells (APC) activate T-cell receptor (TCR), a serie of phosphorylations lead to the recruitment of ZAP70 to the doubly phosphorylated TCR component CD3Z through ITAM motif at the plasma membrane. This recruitment serves to localization to the stimulated TCR and to relieve its autoinhibited conformation. Release of ZAP70 active conformation is further stabilized by phosphorylation mediated by LCK. Subsequently, ZAP70 phosphorylates at least 2 essential adapter proteins: LAT and LCP2. In turn, a large number of signaling molecules are recruited and ultimately lead to lymphokine production, T-cell proliferation and differentiation. Furthermore, ZAP70 controls cytoskeleton modifications, adhesion and mobility of T-lymphocytes, thus ensuring correct delivery of effectors to the APC. ZAP70 is also required for TCR-CD3Z internalization and degradation through interaction with the E3 ubiquitin-protein ligase CBL and adapter proteins SLA and SLA2. Thus, ZAP70 regulates both T-cell activation switch on and switch off by modulating TCR expression at the T-cell surface. During thymocyte development, ZAP70 promotes survival and cell-cycle progression of developing thymocytes before positive selection (when cells are still CD4/CD8 double negative). Additionally, ZAP70-dependent signaling pathway may also contribute to primary B-cells formation and activation through B-cell receptor (BCR). The chain is Tyrosine-protein kinase ZAP-70 (Zap70) from Mus musculus (Mouse).